The sequence spans 233 residues: Biosynthetic peptidoglycan transglycosylase (233 aa).

A helical transmembrane segment spans residues 8-28 (LIALPVGIFIFFNAYVYGNII).

This sequence belongs to the glycosyltransferase 51 family.

It is found in the cell inner membrane. It catalyses the reaction [GlcNAc-(1-&gt;4)-Mur2Ac(oyl-L-Ala-gamma-D-Glu-L-Lys-D-Ala-D-Ala)](n)-di-trans,octa-cis-undecaprenyl diphosphate + beta-D-GlcNAc-(1-&gt;4)-Mur2Ac(oyl-L-Ala-gamma-D-Glu-L-Lys-D-Ala-D-Ala)-di-trans,octa-cis-undecaprenyl diphosphate = [GlcNAc-(1-&gt;4)-Mur2Ac(oyl-L-Ala-gamma-D-Glu-L-Lys-D-Ala-D-Ala)](n+1)-di-trans,octa-cis-undecaprenyl diphosphate + di-trans,octa-cis-undecaprenyl diphosphate + H(+). It functions in the pathway cell wall biogenesis; peptidoglycan biosynthesis. Peptidoglycan polymerase that catalyzes glycan chain elongation from lipid-linked precursors. The chain is Biosynthetic peptidoglycan transglycosylase from Neisseria meningitidis serogroup C / serotype 2a (strain ATCC 700532 / DSM 15464 / FAM18).